We begin with the raw amino-acid sequence, 273 residues long: Terpene cyclase ascF (273 aa).

7 consecutive transmembrane segments (helical) span residues 18–38 (VYEA…ILIA), 49–69 (MPLF…LWVV), 78–98 (MTIW…HGVL), 113–133 (ILVG…SWWI), 153–173 (YWAV…MLCV), 178–198 (GGVS…GLNM), and 217–237 (APAV…GFVL).

It belongs to the paxB family.

The protein localises to the membrane. It carries out the reaction ilicicolin A epoxide = ilicicolin C. The protein operates within secondary metabolite biosynthesis; terpenoid biosynthesis. In terms of biological role, terpene cyclase; part of the asc-1 gene cluster that mediates the biosynthesis of both ascochlorin and ascofuranone, a strong inhibitor of cyanide-insensitive alternative oxidases and a promising drug candidate against African trypanosomiasis. The first step in the pathway is performed by the non-reducing polyketide synthase ascC that produces orsellinic acid by condensing acetyl-CoA with 3 malonyl-CoA units. Orsellinic acid is then prenylated by the prenyltransferase ascA to yield ilicicolinic acid B. Ilicicolinic acid B is further reduced to ilicicolin B by the reductase ascB. The halogenase ascD then chlorinates ilicicolin B to produce ilicicolin A which is converted to ilicicolin A epoxide by the cytochrome P450 monooxygenase ascE that catalyzes stereoselective epoxidation of the terminal double bond of the prenyl group. Ilicicolin A epoxide is the last common precursor for the biosynthesis of ascofuranone and ascochlorin. The terpene cyclase ascF produces a monocyclic terpene, and the cyclization reaction is proposed to be initiated by protonation of the terminal epoxide of ilicicolin A epoxide to generate a monocyclic tertiarycation, which is followed by a series of hydride and methyl shifts with abstraction of proton, leading to the formation of the (14S,15R,19R)-trimethylcyclohexanone ring structure of ilicicolin C, which is finally reduced to ascochlorin by the dehydrogenase ascG. On the other hand, ilicicolin A epoxide is hydroxylated by the cytochrome P450 monooxygenase ascH, and the resultant product is cyclized by the terpene cyclase ascI to ascofuranol via protonation-initiated epoxide ring opening, which facilitates the 6-endo-tet cyclization to form the tetrahy-drofuran ring. Finally, ascofuranol is oxidized into ascofuranone by ascJ. The sequence is that of Terpene cyclase ascF from Acremonium egyptiacum (Oospora egyptiaca).